The sequence spans 503 residues: Cytochrome P450 monooxygenase ecdH (503 aa).

A helical transmembrane segment spans residues 8 to 24 (TTLLCGVISSTLLLLLL). Residues Asn64, Asn324, and Asn413 are each glycosylated (N-linked (GlcNAc...) asparagine). Cys449 is a binding site for heme.

It belongs to the cytochrome P450 family. It depends on heme as a cofactor.

It localises to the membrane. Its pathway is antifungal biosynthesis. Cytochrome P450 monooxygenase; part of the gene cluster that mediates the biosynthesis of echinocandin B, a fungal lipidated cyclic hexapeptide that acts as an antifungal agent. Linoleoyl-AMP, produced by the fatty-acyl-AMP ligase ecdI, is transferred to the initiation carrier domain (T0) of ecdA. The linoleoyl-S-phosphopantetheinyl-T0 is sequentially extended with L-ornithine, L-threonine, L-proline, L-homotyrosine, L-threonine, and 4R-methyl-L-proline to form the linear hexapeptide. Thereafter, the terminal condensation (C7) performs macrocyclization of the NRPS product and the cyclic scaffold is released from ecdA. All six of the amino acid residues are hydroxylated, including 4R,5R-dihydroxy-L-ornithine, 4R-hydroxyl-L-proline, 3S,4S-dihydroxy-L-homotyrosine, and 3S-hydroxyl-4S-methyl-L-prolin. In the pathway, all the hydroxylation reactions are proposed to occur following completion of the cyclic peptide, so the unhydroxylated precursor produced by ecdA will undergo six rounds of hydroxylation. Five hydroxylase genes (ecdG, ecdH, ecdK, htyE and htyF) are embedded within the echinocandin B (ecd) and L-homotyrosine (hty) clusters. The sequence is that of Cytochrome P450 monooxygenase ecdH from Aspergillus rugulosus (Emericella rugulosa).